The primary structure comprises 459 residues: UDP-N-acetylmuramoylalanine--D-glutamate ligase (459 aa).

119 to 125 (GTNGKTT) provides a ligand contact to ATP.

This sequence belongs to the MurCDEF family.

Its subcellular location is the cytoplasm. The catalysed reaction is UDP-N-acetyl-alpha-D-muramoyl-L-alanine + D-glutamate + ATP = UDP-N-acetyl-alpha-D-muramoyl-L-alanyl-D-glutamate + ADP + phosphate + H(+). It participates in cell wall biogenesis; peptidoglycan biosynthesis. Its function is as follows. Cell wall formation. Catalyzes the addition of glutamate to the nucleotide precursor UDP-N-acetylmuramoyl-L-alanine (UMA). This chain is UDP-N-acetylmuramoylalanine--D-glutamate ligase, found in Lacticaseibacillus casei (strain BL23) (Lactobacillus casei).